Here is a 157-residue protein sequence, read N- to C-terminus: DNA gyrase inhibitor 2 (157 aa).

This sequence belongs to the DNA gyrase inhibitor family. Interacts with DNA gyrase.

The protein resides in the cytoplasm. Its function is as follows. Inhibits the supercoiling activity of DNA gyrase. Acts by inhibiting DNA gyrase at an early step, prior to (or at the step of) binding of DNA by the gyrase. It protects cells against toxins that target DNA gyrase, by inhibiting activity of these toxins and reducing the formation of lethal double-strand breaks in the cell. The protein is DNA gyrase inhibitor 2 of Dickeya dadantii (strain 3937) (Erwinia chrysanthemi (strain 3937)).